The chain runs to 318 residues: NADH-ubiquinone oxidoreductase chain 1 (318 aa).

A run of 8 helical transmembrane segments spans residues 2 to 22 (FMIN…FLTL), 68 to 88 (ISMF…MWIP), 100 to 120 (LGVL…LWSG), 147 to 167 (AIIL…TLII), 172 to 192 (VWLI…TLAE), 217 to 237 (AGPF…MNIF), 253 to 273 (ELYT…FLWI), and 294 to 314 (LPLT…LSSI).

Belongs to the complex I subunit 1 family.

Its subcellular location is the mitochondrion inner membrane. The enzyme catalyses a ubiquinone + NADH + 5 H(+)(in) = a ubiquinol + NAD(+) + 4 H(+)(out). Its function is as follows. Core subunit of the mitochondrial membrane respiratory chain NADH dehydrogenase (Complex I) that is believed to belong to the minimal assembly required for catalysis. Complex I functions in the transfer of electrons from NADH to the respiratory chain. The immediate electron acceptor for the enzyme is believed to be ubiquinone. The sequence is that of NADH-ubiquinone oxidoreductase chain 1 (MT-ND1) from Ovis aries (Sheep).